Here is a 177-residue protein sequence, read N- to C-terminus: Photosystem I assembly protein Ycf4 (177 aa).

2 consecutive transmembrane segments (helical) span residues 20 to 40 (VALL…SSYF) and 60 to 80 (LVMG…WAVI).

Belongs to the Ycf4 family.

Its subcellular location is the cellular thylakoid membrane. Its function is as follows. Seems to be required for the assembly of the photosystem I complex. This chain is Photosystem I assembly protein Ycf4, found in Synechococcus sp. (strain RCC307).